Consider the following 311-residue polypeptide: Serine/threonine-protein phosphatase PP1-1 (311 aa).

Positions 53, 55, 82, and 114 each coordinate Mn(2+). His115 acts as the Proton donor in catalysis. Residues His164 and His238 each coordinate Mn(2+).

This sequence belongs to the PPP phosphatase family. PP-6 (PP-V) subfamily. In terms of assembly, inactivated in a complex with phosphatase methylesterase PPE1 (PP2Ai). Interacts with phosphatase 2A activator RRD1, which can reactivate PP2Ai by dissociating the catalytic subunit from the complex. Forms a ternary complex with RRD1-TAP42. Mn(2+) is required as a cofactor.

The protein resides in the cytoplasm. The catalysed reaction is O-phospho-L-seryl-[protein] + H2O = L-seryl-[protein] + phosphate. The enzyme catalyses O-phospho-L-threonyl-[protein] + H2O = L-threonyl-[protein] + phosphate. In terms of biological role, involved in the dephosphorylation of the large subunit of RNA polymerase II. Is required in late G1 for normal G1 cyclin expression, bud initiation and expression of certain genes that are periodically expressed during late G1. Associates with the SAP proteins in a cell cycle-dependent manner. This is Serine/threonine-protein phosphatase PP1-1 (SIT4) from Saccharomyces cerevisiae (strain ATCC 204508 / S288c) (Baker's yeast).